We begin with the raw amino-acid sequence, 518 residues long: 2-isopropylmalate synthase (518 aa).

The region spanning 4-266 (INVFDTTLRD…DSSLNLHELK (263 aa)) is the Pyruvate carboxyltransferase domain. Positions 13, 201, 203, and 237 each coordinate Mn(2+). Residues 391 to 518 (EFLSLQVHYG…GLKRQTAVGS (128 aa)) are regulatory domain.

The protein belongs to the alpha-IPM synthase/homocitrate synthase family. LeuA type 1 subfamily. In terms of assembly, homodimer. Mn(2+) is required as a cofactor.

The protein resides in the cytoplasm. The enzyme catalyses 3-methyl-2-oxobutanoate + acetyl-CoA + H2O = (2S)-2-isopropylmalate + CoA + H(+). It functions in the pathway amino-acid biosynthesis; L-leucine biosynthesis; L-leucine from 3-methyl-2-oxobutanoate: step 1/4. Functionally, catalyzes the condensation of the acetyl group of acetyl-CoA with 3-methyl-2-oxobutanoate (2-ketoisovalerate) to form 3-carboxy-3-hydroxy-4-methylpentanoate (2-isopropylmalate). The protein is 2-isopropylmalate synthase of Bacillus velezensis (strain DSM 23117 / BGSC 10A6 / LMG 26770 / FZB42) (Bacillus amyloliquefaciens subsp. plantarum).